Here is a 335-residue protein sequence, read N- to C-terminus: MAEKIAVIGAGSWGTTLADLLAKKGHEVTLWAYEPELVLEMRDNRENSLFLPGIKLNERLAFTNDLAEAYRGCSMVLCVVPSQLVRRVMTNSLPFLPKEAIIVSASKGIEVDTLATVSEIYQEILPPEQFQVLAALSGPSFAREVALEMPTAVTAAASSEAVARRVQEAFTTDYFRVYRNSDVVGVELGGAIKNVIAIAAGISDGLGFGSNTRAALITRGLAEMTRLGVAMGAQPSTFAGLAGMGDLVLTCTGDLSRNRSVGIQIGQGRTLSEILGEMRMVAEGVKTTESAYNLAKKLGVEMPIIEQMYQMLYQNKSAREAVLELMTRNLKAEGV.

The NADPH site is built by S12, W13, and K107. Sn-glycerol 3-phosphate-binding residues include K107, G138, and S140. A142 serves as a coordination point for NADPH. Sn-glycerol 3-phosphate-binding residues include K193, D246, S256, R257, and N258. The Proton acceptor role is filled by K193. R257 is a binding site for NADPH. NADPH contacts are provided by V281 and E283.

The protein belongs to the NAD-dependent glycerol-3-phosphate dehydrogenase family.

It localises to the cytoplasm. The enzyme catalyses sn-glycerol 3-phosphate + NAD(+) = dihydroxyacetone phosphate + NADH + H(+). It carries out the reaction sn-glycerol 3-phosphate + NADP(+) = dihydroxyacetone phosphate + NADPH + H(+). It participates in membrane lipid metabolism; glycerophospholipid metabolism. Its function is as follows. Catalyzes the reduction of the glycolytic intermediate dihydroxyacetone phosphate (DHAP) to sn-glycerol 3-phosphate (G3P), the key precursor for phospholipid synthesis. This chain is Glycerol-3-phosphate dehydrogenase [NAD(P)+], found in Citrifermentans bemidjiense (strain ATCC BAA-1014 / DSM 16622 / JCM 12645 / Bem) (Geobacter bemidjiensis).